The chain runs to 533 residues: CWF19-like protein 1 homolog (533 aa).

Positions 290 to 314 (EMGGAEDGAGNGRKRHNDGGNDGPR) are disordered.

The protein belongs to the CWF19 family.

The chain is CWF19-like protein 1 homolog from Caenorhabditis elegans.